Here is a 390-residue protein sequence, read N- to C-terminus: L-serine phosphate decarboxylase Cj1436c (390 aa).

Residue Lys243 is modified to N6-(pyridoxal phosphate)lysine.

Belongs to the class-I pyridoxal-phosphate-dependent aminotransferase family. Requires pyridoxal 5'-phosphate as cofactor.

The catalysed reaction is O-phospho-L-serine + H(+) = phosphoethanolamine + CO2. Its pathway is capsule biogenesis; capsule polysaccharide biosynthesis. Functionally, pyridoxal phosphate (PLP)-dependent decarboxylase involved in the biosynthesis of amidated D-glucuronic acid structures found on the capsular polysaccharide (CPS) of C.jejuni. Catalyzes the decarboxylation of L-serine phosphate to ethanolamine phosphate. Less active with L-threonine phosphate. No activity with L-serine, L-threonine, L-aspartate or L-glutamate. The sequence is that of L-serine phosphate decarboxylase Cj1436c from Campylobacter jejuni subsp. jejuni serotype O:2 (strain ATCC 700819 / NCTC 11168).